The chain runs to 112 residues: T cell receptor alpha variable 41 (112 aa).

A signal peptide spans 1–21 (MVKIRQFLLAILWLQLSCVSA). The Ig-like domain occupies 24 to 112 (NEVEQSPQNL…DSAVYICAVR (89 aa)). Asn-32 and Asn-44 each carry an N-linked (GlcNAc...) asparagine glycan. Cys-45 and Cys-109 are disulfide-bonded.

Alpha-beta TR is a heterodimer composed of an alpha and beta chain; disulfide-linked. The alpha-beta TR is associated with the transmembrane signaling CD3 coreceptor proteins to form the TR-CD3 (TcR or TCR). The assembly of alpha-beta TR heterodimers with CD3 occurs in the endoplasmic reticulum where a single alpha-beta TR heterodimer associates with one CD3D-CD3E heterodimer, one CD3G-CD3E heterodimer and one CD247 homodimer forming a stable octameric structure. CD3D-CD3E and CD3G-CD3E heterodimers preferentially associate with TR alpha and TR beta chains, respectively. The association of the CD247 homodimer is the last step of TcR assembly in the endoplasmic reticulum and is required for transport to the cell surface.

The protein localises to the cell membrane. In terms of biological role, v region of the variable domain of T cell receptor (TR) alpha chain that participates in the antigen recognition. Alpha-beta T cell receptors are antigen specific receptors which are essential to the immune response and are present on the cell surface of T lymphocytes. Recognize peptide-major histocompatibility (MH) (pMH) complexes that are displayed by antigen presenting cells (APC), a prerequisite for efficient T cell adaptive immunity against pathogens. Binding of alpha-beta TR to pMH complex initiates TR-CD3 clustering on the cell surface and intracellular activation of LCK that phosphorylates the ITAM motifs of CD3G, CD3D, CD3E and CD247 enabling the recruitment of ZAP70. In turn ZAP70 phosphorylates LAT, which recruits numerous signaling molecules to form the LAT signalosome. The LAT signalosome propagates signal branching to three major signaling pathways, the calcium, the mitogen-activated protein kinase (MAPK) kinase and the nuclear factor NF-kappa-B (NF-kB) pathways, leading to the mobilization of transcription factors that are critical for gene expression and essential for T cell growth and differentiation. The T cell repertoire is generated in the thymus, by V-(D)-J rearrangement. This repertoire is then shaped by intrathymic selection events to generate a peripheral T cell pool of self-MH restricted, non-autoaggressive T cells. Post-thymic interaction of alpha-beta TR with the pMH complexes shapes TR structural and functional avidity. This Homo sapiens (Human) protein is T cell receptor alpha variable 41.